A 140-amino-acid chain; its full sequence is Protein BIC1 (140 aa).

The segment covering 1 to 10 has biased composition (polar residues); the sequence is MMNIDDTTSP. Residues 1 to 71 are disordered; it reads MMNIDDTTSP…RVDTGRERLK (71 aa). The span at 42 to 68 shows a compositional bias: basic and acidic residues; the sequence is ADKKDLALLEEKPKQSQEEDRVDTGRE.

As to quaternary structure, interacts with CRY2 in both darkness and light.

It localises to the nucleus. Functionally, regulates the blue-light dependent dimerization of CRY2 and formation of photobodies. Interacts with photoexited CRY2 to inhibit its activity. Inhibits CRY phosphorylation. This is Protein BIC1 from Arabidopsis thaliana (Mouse-ear cress).